The chain runs to 786 residues: Endonuclease MutS2 (786 aa).

335–342 (GPNTGGKT) provides a ligand contact to ATP. The Smr domain maps to 711–786 (LDLRGERFEN…GLGVTVVELK (76 aa)).

The protein belongs to the DNA mismatch repair MutS family. MutS2 subfamily. As to quaternary structure, homodimer. Binds to stalled ribosomes, contacting rRNA.

Functionally, endonuclease that is involved in the suppression of homologous recombination and thus may have a key role in the control of bacterial genetic diversity. In terms of biological role, acts as a ribosome collision sensor, splitting the ribosome into its 2 subunits. Detects stalled/collided 70S ribosomes which it binds and splits by an ATP-hydrolysis driven conformational change. Acts upstream of the ribosome quality control system (RQC), a ribosome-associated complex that mediates the extraction of incompletely synthesized nascent chains from stalled ribosomes and their subsequent degradation. Probably generates substrates for RQC. The polypeptide is Endonuclease MutS2 (Bacillus cereus (strain B4264)).